A 205-amino-acid polypeptide reads, in one-letter code: Recombination protein RecR (205 aa).

The C4-type zinc-finger motif lies at 59–74 (CARCNTFCEGGLCDIC). The 96-residue stretch at 82–177 (RRLMVVHMPA…KVSRLSQGIP (96 aa)) folds into the Toprim domain.

The protein belongs to the RecR family.

Functionally, may play a role in DNA repair. It seems to be involved in an RecBC-independent recombinational process of DNA repair. It may act with RecF and RecO. The polypeptide is Recombination protein RecR (Neisseria meningitidis serogroup A / serotype 4A (strain DSM 15465 / Z2491)).